We begin with the raw amino-acid sequence, 232 residues long: Ribose-5-phosphate isomerase A (232 aa).

Residues 28–31, 83–86, and 96–99 contribute to the substrate site; these read TGST, DGAD, and KGGG. The active-site Proton acceptor is E105. K123 provides a ligand contact to substrate.

This sequence belongs to the ribose 5-phosphate isomerase family. Homodimer.

It catalyses the reaction aldehydo-D-ribose 5-phosphate = D-ribulose 5-phosphate. The protein operates within carbohydrate degradation; pentose phosphate pathway; D-ribose 5-phosphate from D-ribulose 5-phosphate (non-oxidative stage): step 1/1. Functionally, catalyzes the reversible conversion of ribose-5-phosphate to ribulose 5-phosphate. The chain is Ribose-5-phosphate isomerase A from Rhodopseudomonas palustris (strain BisB18).